Reading from the N-terminus, the 421-residue chain is Synaptotagmin-1 (421 aa).

Residues 1–40 (MVSESHHEALAAPPATTVAAAPPSNVTEPASPGGGGGKED) form a disordered region. Residues 1 to 60 (MVSESHHEALAAPPATTVAAAPPSNVTEPASPGGGGGKEDAFSKLKEKFMNELNKIPLPP) are Vesicular-facing. Residues 10–23 (LAAPPATTVAAAPP) show a composition bias toward low complexity. Asn25 is a glycosylation site (N-linked (GlcNAc...) asparagine). The helical transmembrane segment at 61–81 (WALIAIAIVAVLLILTCCFCL) threads the bilayer. 5 S-palmitoyl cysteine lipidation sites follow: Cys77, Cys78, Cys80, Cys82, and Cys85. Residues 82 to 421 (CKKCLFKKKN…EVDAMLAVKK (340 aa)) are Cytoplasmic-facing. The disordered stretch occupies residues 94–139 (KGKEKGGKNAINMKDVKDLGKTMKDQDDDAETGLTDGEEKEEPKEV). The span at 107–118 (KDVKDLGKTMKD) shows a compositional bias: basic and acidic residues. The span at 119-133 (QDDDAETGLTDGEEK) shows a compositional bias: acidic residues. Residues 135 to 381 (EPKEVEKLGK…AIGKVFVGYN (247 aa)) are phospholipid binding. C2 domains lie at 141–260 (KLGK…EEWR) and 272–405 (KLGD…AQWH). Ca(2+) is bound by residues Leu171, Asp172, Asp178, Asp230, Phe231, Asp232, Ser235, Lys236, Asp238, Asp303, Asp309, Asp363, Asp365, and Asp371.

The protein belongs to the synaptotagmin family. Homotetramer. Ca(2+) is required as a cofactor.

It is found in the cytoplasmic vesicle. Its subcellular location is the secretory vesicle membrane. It localises to the secretory vesicle. The protein localises to the synaptic vesicle membrane. The protein resides in the chromaffin granule membrane. It is found in the cytoplasm. Functionally, calcium sensor that participates in triggering neurotransmitter release at the synapse. May have a regulatory role in the membrane interactions during trafficking of synaptic vesicles at the active zone of the synapse. It binds acidic phospholipids with a specificity that requires the presence of both an acidic head group and a diacyl backbone. May play a role in dendrite formation by melanocytes. May play a role in regulating the secretion of hormones relevant to the reproduction and egg-laying of female geese. This Anser cygnoides (Swan goose) protein is Synaptotagmin-1.